Here is a 460-residue protein sequence, read N- to C-terminus: MRAWEDFLLLQEKEIGTSTVDKWLRSLKVLCFDACNLYLEAKDSFQVTWFEEHIRHKVKTSLVNNNGKLIRVHITSLDKTAPFYKEKQIQQEKTAYFTMQYGNVNPEMTFGNFLVTPENDLPFRILQEFTKPAEDTAGFPFNPIYLFGPEGSGKTHLMQAAVNALREFGGKILYVASDLFTEHLVSAIRSGEMQRFRSFYRNVDALFIEDIEVFSGKGATQEEFFHTFNSLQTEGKLIVISSAYAPADLKAMEERLISRFEWGVAVPIHPLTKEGLRSFLMHQAEQLSVRIEDTALDFLIHALSSNVKTLIDALKLLSKRVAYKKLAQQLLYEDDIQTLLHDVLEVAESVRLTPSGIVRAVAKYYGVSPESILGRSQSREYVLPRQVSMYLCRQKLSLSYVRIGDVFSRDHSTVISSIRAISQKVEEGGDDISIATQELMKSLTSAYKSLEFFPEEEISC.

Residues Met1–Lys68 form a domain I, interacts with DnaA modulators region. Positions Lys68 to Gly102 are domain II. Positions Asn103–Val321 are domain III, AAA+ region. ATP contacts are provided by Gly151, Gly153, Lys154, and Thr155. The domain IV, binds dsDNA stretch occupies residues Ala322–Cys460.

The protein belongs to the DnaA family. Oligomerizes as a right-handed, spiral filament on DNA at oriC.

It localises to the cytoplasm. In terms of biological role, plays an essential role in the initiation and regulation of chromosomal replication. ATP-DnaA binds to the origin of replication (oriC) to initiate formation of the DNA replication initiation complex once per cell cycle. Binds the DnaA box (a 9 base pair repeat at the origin) and separates the double-stranded (ds)DNA. Forms a right-handed helical filament on oriC DNA; dsDNA binds to the exterior of the filament while single-stranded (ss)DNA is stabiized in the filament's interior. The ATP-DnaA-oriC complex binds and stabilizes one strand of the AT-rich DNA unwinding element (DUE), permitting loading of DNA polymerase. After initiation quickly degrades to an ADP-DnaA complex that is not apt for DNA replication. Binds acidic phospholipids. The protein is Chromosomal replication initiator protein DnaA 2 of Chlamydia caviae (strain ATCC VR-813 / DSM 19441 / 03DC25 / GPIC) (Chlamydophila caviae).